A 215-amino-acid chain; its full sequence is Pyridoxine/pyridoxamine 5'-phosphate oxidase (215 aa).

Substrate-binding positions include 9 to 12 and K69; that span reads RRDY. FMN contacts are provided by residues 64 to 69, 79 to 80, K86, and Q108; these read RVLLLK and FT. Positions 126, 130, and 134 each coordinate substrate. FMN contacts are provided by residues 143-144 and W188; that span reads QS. 194–196 serves as a coordination point for substrate; the sequence is RLH. R198 lines the FMN pocket.

The protein belongs to the pyridoxamine 5'-phosphate oxidase family. As to quaternary structure, homodimer. It depends on FMN as a cofactor.

The enzyme catalyses pyridoxamine 5'-phosphate + O2 + H2O = pyridoxal 5'-phosphate + H2O2 + NH4(+). The catalysed reaction is pyridoxine 5'-phosphate + O2 = pyridoxal 5'-phosphate + H2O2. It participates in cofactor metabolism; pyridoxal 5'-phosphate salvage; pyridoxal 5'-phosphate from pyridoxamine 5'-phosphate: step 1/1. It functions in the pathway cofactor metabolism; pyridoxal 5'-phosphate salvage; pyridoxal 5'-phosphate from pyridoxine 5'-phosphate: step 1/1. In terms of biological role, catalyzes the oxidation of either pyridoxine 5'-phosphate (PNP) or pyridoxamine 5'-phosphate (PMP) into pyridoxal 5'-phosphate (PLP). This Pseudomonas syringae pv. tomato (strain ATCC BAA-871 / DC3000) protein is Pyridoxine/pyridoxamine 5'-phosphate oxidase.